A 251-amino-acid chain; its full sequence is MNVSDLLNILNELLHPEYFSDYGPNGLQVGNAQTAIRKVAVAVTADLATIEKAIACEANVLLVHHGIFWKGMPYSITGILYQRMQRLMEGNIQLIAYHLPLDAHTTIGNNWKVARDLGWEQLESFGSSQPSLGVKGVFPEMEVHDFISQLSAYYQTPVLAKALGGKKRVSSAALISGGAYREISEAKNQQVDCFITGNFDEPAWSLAHELAIHFLAFGHTATEKVGPKALAQYLKGAGLESVVFLDTDNPF.

A divalent metal cation is bound by residues His-64, His-65, Asp-102, His-219, and Glu-223.

It belongs to the GTP cyclohydrolase I type 2/NIF3 family. As to quaternary structure, homohexamer.

In Chlamydia trachomatis serovar D (strain ATCC VR-885 / DSM 19411 / UW-3/Cx), this protein is GTP cyclohydrolase 1 type 2 homolog.